Here is a 445-residue protein sequence, read N- to C-terminus: Argininosuccinate synthase (445 aa).

Residues 17–25 (AFSGGLDTS) and A43 contribute to the ATP site. Y99 lines the L-citrulline pocket. ATP-binding residues include G129 and T131. Residues T131, N135, and D136 each contribute to the L-aspartate site. N135 serves as a coordination point for L-citrulline. D136 serves as a coordination point for ATP. L-citrulline-binding residues include R139 and S192. Residue D194 coordinates ATP. Residues T201, E203, and E280 each contribute to the L-citrulline site.

It belongs to the argininosuccinate synthase family. Type 2 subfamily. Homotetramer.

Its subcellular location is the cytoplasm. The catalysed reaction is L-citrulline + L-aspartate + ATP = 2-(N(omega)-L-arginino)succinate + AMP + diphosphate + H(+). It functions in the pathway amino-acid biosynthesis; L-arginine biosynthesis; L-arginine from L-ornithine and carbamoyl phosphate: step 2/3. The protein is Argininosuccinate synthase of Bradyrhizobium sp. (strain BTAi1 / ATCC BAA-1182).